The primary structure comprises 98 residues: C-X-C motif chemokine 10 (98 aa).

An N-terminal signal peptide occupies residues 1-21; it reads MNQTAILICCLIFLTLSGIQG. At R26 the chain carries Citrulline; by PAD2. 2 disulfides stabilise this stretch: C30–C57 and C32–C74.

This sequence belongs to the intercrine alpha (chemokine CxC) family. Monomer, dimer, and tetramer. Interacts with CXCR3 (via N-terminus). In terms of processing, several proteases can mediate post-secretion cleavages. DPP4 cleaves CXCL10 on its N-terminal 2 amino acids leading to an antagonist form of CXCL10. This dominant negative form is capable of binding CXCR3 but does not induce signaling. MMP9 cleaves 9 amino acids instead. Mainly secreted by monocytes, endothelial cells as well as fibroblasts. Expressed by epithelial cells in thymus. Microglial cells produce CXCL10 in response to viral stimulation.

Its subcellular location is the secreted. Its function is as follows. Pro-inflammatory cytokine that is involved in a wide variety of processes such as chemotaxis, differentiation, and activation of peripheral immune cells, regulation of cell growth, apoptosis and modulation of angiostatic effects. Plays thereby an important role during viral infections by stimulating the activation and migration of immune cells to the infected sites. Mechanistically, binding of CXCL10 to the CXCR3 receptor activates G protein-mediated signaling and results in downstream activation of phospholipase C-dependent pathway, an increase in intracellular calcium production and actin reorganization. In turn, recruitment of activated Th1 lymphocytes occurs at sites of inflammation. Activation of the CXCL10/CXCR3 axis also plays an important role in neurons in response to brain injury for activating microglia, the resident macrophage population of the central nervous system, and directing them to the lesion site. This recruitment is an essential element for neuronal reorganization. The sequence is that of C-X-C motif chemokine 10 (CXCL10) from Homo sapiens (Human).